Consider the following 62-residue polypeptide: Enterocin E-760 (62 aa).

The protein resides in the secreted. Functionally, bacteriocin active against the Gram-negative bacteria S.enteritidis, S.choleraesuis, S.typhimurium, S.gallinarum, E.coli O157:H7, Y.enterocolitica, C.freundii, K.pneumoniae, S.dysentriae, P.aeruginosa, P.mirabilis, M.morganii, C.jejuni and 20 other Campylobacter isolates, and the Gram-positive bacteria S.aureus, S.epidermidis and L.monocytogenes. In Enterococcus sp, this protein is Enterocin E-760.